A 469-amino-acid polypeptide reads, in one-letter code: MLSLPLLLLLLWGMGSHSFPTVPSETREEDVEMVQKYLENYYNLKSDGEQIEKQRHRSPVVEKLKQMQEFFGLKVTGKPDAETLNVMKQPRCGVPDVAEFVLTEGNPRWENTHLTYRIENYTPDLPRADVDQAIEKAFQLWSNVSPLTFTKVSEGQADIMISFVRGDHRDNSPFDGPGGNLAHAFQPGPRIGGDAHFDEDETWTSNFRNYNLYRVAAHEFGHSLGLSHSTDIGALMYPNYFFTGDVQLSQDDINGIQAIYGPSQNPIQPIGPQTPEVCDSKLTFDAITTIRGEVMFFKDRFYMRINPYYPEAELNFISIFWPQLPNGLQAAYEVSHRDEVRFFKGNKYWAVKGQDVLYGYPKDIHRSFGFPSTVKNIDAAVSEEDTGKTYFFVADKYWRYDEYKRSMDAGYPKMIADDFPGIGDKVDAVFQKDGFFYFFHGTRQYKFDPKTKRILTLQKANSWFNCRKN.

An N-terminal signal peptide occupies residues 1-18; that stretch reads MLSLPLLLLLLWGMGSHS. The propeptide at 19–99 is activation peptide; the sequence is FPTVPSETRE…PRCGVPDVAE (81 aa). A Cysteine switch motif is present at residues 90–97; it reads PRCGVPDV. A Zn(2+)-binding site is contributed by Cys-92. Ca(2+)-binding residues include Asp-124 and Asp-158. The Zn(2+) site is built by His-168 and Asp-170. Ca(2+) contacts are provided by Asp-175, Gly-176, Gly-178, and Asn-180. Zn(2+) is bound at residue His-183. Arg-190, Gly-192, and Asp-194 together coordinate Ca(2+). His-196 is a binding site for Zn(2+). Ca(2+) is bound by residues Asp-198, Glu-199, and Glu-201. His-218 contributes to the Zn(2+) binding site. The active site involves Glu-219. Zn(2+)-binding residues include His-222 and His-228. Phosphothreonine is present on Thr-274. Hemopexin repeat units follow at residues 275–324, 325–371, 374–422, and 423–466; these read PEVC…WPQL, PNGL…FGFP, VKNI…FPGI, and GDKV…WFNC. Residues Cys-278 and Cys-466 are joined by a disulfide bond. Residues Asp-285 and Gln-329 each coordinate Ca(2+). Tyr-360 carries the post-translational modification Phosphotyrosine; by PKDCC. 2 residues coordinate Ca(2+): Asp-378 and Asp-427.

The protein belongs to the peptidase M10A family. The cofactor is Ca(2+). Zn(2+) is required as a cofactor. In terms of processing, tyrosine phosphorylated in platelets by PKDCC/VLK.

It is found in the secreted. It localises to the extracellular space. The protein localises to the extracellular matrix. It carries out the reaction Cleavage of the triple helix of collagen at about three-quarters of the length of the molecule from the N-terminus, at 775-Gly-|-Ile-776 in the alpha1(I) chain. Cleaves synthetic substrates and alpha-macroglobulins at bonds where P1' is a hydrophobic residue.. Its activity is regulated as follows. Can be activated without removal of the activation peptide. In terms of biological role, cleaves collagens of types I, II, and III at one site in the helical domain. Also cleaves collagens of types VII and X. This is Interstitial collagenase (MMP1) from Equus caballus (Horse).